A 362-amino-acid polypeptide reads, in one-letter code: Large ribosomal subunit protein uL3 (362 aa).

The tract at residues 340 to 362 (RPPKKKPPVQRPQITYVSVESKQ) is disordered. Residues 351-362 (PQITYVSVESKQ) are compositionally biased toward polar residues.

This sequence belongs to the universal ribosomal protein uL3 family. As to quaternary structure, part of the 50S ribosomal subunit. Forms a cluster with proteins L14 and L24e.

Functionally, one of the primary rRNA binding proteins, it binds directly near the 3'-end of the 23S rRNA, where it nucleates assembly of the 50S subunit. This is Large ribosomal subunit protein uL3 from Pyrococcus horikoshii (strain ATCC 700860 / DSM 12428 / JCM 9974 / NBRC 100139 / OT-3).